The sequence spans 173 residues: Lipoprotein signal peptidase (173 aa).

3 consecutive transmembrane segments (helical) span residues 11–31 (FGLIFAAVAFLLDQVTKWIVT), 69–89 (TTRWTLVAVTGIVAAAVAFWM), and 93–113 (QAKGDVIALALILGGALGNIV). Active-site residues include Asp123 and Asp142. Residues 134–154 (PFMIFNVADACITIGVLLLVA) form a helical membrane-spanning segment.

The protein belongs to the peptidase A8 family.

The protein resides in the cell inner membrane. It catalyses the reaction Release of signal peptides from bacterial membrane prolipoproteins. Hydrolyzes -Xaa-Yaa-Zaa-|-(S,diacylglyceryl)Cys-, in which Xaa is hydrophobic (preferably Leu), and Yaa (Ala or Ser) and Zaa (Gly or Ala) have small, neutral side chains.. It participates in protein modification; lipoprotein biosynthesis (signal peptide cleavage). Its function is as follows. This protein specifically catalyzes the removal of signal peptides from prolipoproteins. This chain is Lipoprotein signal peptidase, found in Sphingopyxis alaskensis (strain DSM 13593 / LMG 18877 / RB2256) (Sphingomonas alaskensis).